Consider the following 158-residue polypeptide: MNLTHINEEGRARMVDVSEKAETKREAVAIGSIYMKNETLRRIHEGTIKKGDVLAVAQVAGIMAAKNTSHMIPMCHPIMITGCDISFNLDFENSKIDIKAVVKTVGQTGVEMEALTAVTVAALTIYDMCKAIDRDMVISEIMLVKKSGGKSGLYEREV.

Residues 74–76 (MCH) and 112–113 (ME) each bind substrate. The active site involves Asp-127.

It belongs to the MoaC family. Homohexamer; trimer of dimers.

It carries out the reaction (8S)-3',8-cyclo-7,8-dihydroguanosine 5'-triphosphate = cyclic pyranopterin phosphate + diphosphate. It functions in the pathway cofactor biosynthesis; molybdopterin biosynthesis. In terms of biological role, catalyzes the conversion of (8S)-3',8-cyclo-7,8-dihydroguanosine 5'-triphosphate to cyclic pyranopterin monophosphate (cPMP). The chain is Cyclic pyranopterin monophosphate synthase from Thermoanaerobacter pseudethanolicus (strain ATCC 33223 / 39E) (Clostridium thermohydrosulfuricum).